A 32-amino-acid chain; its full sequence is uncharacterized protein (32 aa).

This is an uncharacterized protein from Haloarcula hispanica (His1V).